The chain runs to 120 residues: Large ribosomal subunit protein uL22 (120 aa).

The disordered stretch occupies residues 1–25; it reads MFVNKKYTAKGKNLPSSPKKVRPIA.

The protein belongs to the universal ribosomal protein uL22 family. In terms of assembly, part of the 50S ribosomal subunit.

Its function is as follows. This protein binds specifically to 23S rRNA; its binding is stimulated by other ribosomal proteins, e.g. L4, L17, and L20. It is important during the early stages of 50S assembly. It makes multiple contacts with different domains of the 23S rRNA in the assembled 50S subunit and ribosome. Functionally, the globular domain of the protein is located near the polypeptide exit tunnel on the outside of the subunit, while an extended beta-hairpin is found that lines the wall of the exit tunnel in the center of the 70S ribosome. The polypeptide is Large ribosomal subunit protein uL22 (Borrelia duttonii (strain Ly)).